Reading from the N-terminus, the 1536-residue chain is Glycogen debranching enzyme (1536 aa).

Catalysis depends on residues Asp-535, His-538, and Asp-670.

This sequence belongs to the glycogen debranching enzyme family. Interacts with IGD1.

It is found in the mitochondrion. The protein localises to the cytoplasm. The catalysed reaction is Transfers a segment of a (1-&gt;4)-alpha-D-glucan to a new position in an acceptor, which may be glucose or a (1-&gt;4)-alpha-D-glucan.. The enzyme catalyses Hydrolysis of (1-&gt;6)-alpha-D-glucosidic branch linkages in glycogen phosphorylase limit dextrin.. Activity is inhibited by IGD1. Multifunctional enzyme acting as 1,4-alpha-D-glucan:1,4-alpha-D-glucan 4-alpha-D-glycosyltransferase and amylo-1,6-glucosidase in glycogen degradation. This Saccharomyces cerevisiae (strain ATCC 204508 / S288c) (Baker's yeast) protein is Glycogen debranching enzyme (GDB1).